Reading from the N-terminus, the 142-residue chain is MAKPLWLSLILFIIPVALAVGVDQSKNEVKAQNYFGSINISNANVKQCVWFAMKEYNKESEDKYVFLVDKILHAKLQITDRMEYQIDVQISRSNCKKPLNNTENCIPQKKPELEKKMSCSFLVGALPWNGEFNLLSKECKDV.

The signal sequence occupies residues 1–19 (MAKPLWLSLILFIIPVALA). N39 is a glycosylation site (N-linked (GlcNAc...) asparagine). The Secondary area of contact motif lies at 77–81 (QITDR). Disulfide bonds link C95-C105 and C119-C139. N100 is a glycosylation site (N-linked (GlcNAc...) asparagine).

The protein belongs to the cystatin family. As to expression, proximal caput region of the epididymis. Lower expression in the testis. Within the testis it is localized to the elongating spermatids, whereas within the epididymis it is exclusively synthesized by the proximal caput epithelium.

It localises to the secreted. In terms of biological role, performs a specialized role during sperm development and maturation. The sequence is that of Cystatin-8 (Cst8) from Mus musculus (Mouse).